The sequence spans 210 residues: Redox-sensing transcriptional repressor Rex (210 aa).

Residues 16 to 55 (IYSRYLRQLIEEGVETVSSGEIAAGVGVSSAQVRKDLAYF) constitute a DNA-binding region (H-T-H motif). 90-95 (GAGKLG) contacts NAD(+).

It belongs to the transcriptional regulatory Rex family. Homodimer.

The protein resides in the cytoplasm. Functionally, modulates transcription in response to changes in cellular NADH/NAD(+) redox state. The sequence is that of Redox-sensing transcriptional repressor Rex from Syntrophomonas wolfei subsp. wolfei (strain DSM 2245B / Goettingen).